A 362-amino-acid polypeptide reads, in one-letter code: PDZ and LIM domain protein 3 (362 aa).

One can recognise a PDZ domain in the interval 1–84 (MPQNVVLPGP…QLCLKIDRAE (84 aa)). 3 positions are modified to phosphoserine: Ser18, Ser92, and Ser263. Residues 261–282 (DGSDDRPAGTRSVRPVTKVHGG) form a disordered region. Residues 290–349 (PLCDKCGSGIVGAVVKARDKYRHPECFVCADCNLNLKQKGYFFVEGELYCEMHARARTRP) form the LIM zinc-binding domain.

Interacts with ACTN2. Forms a heterodimer with PDLIM4 (via LIM domain). In terms of tissue distribution, highly expressed in skeletal muscle and at low levels in the heart.

The protein resides in the cytoplasm. It is found in the myofibril. Its subcellular location is the sarcomere. It localises to the z line. Functionally, may play a role in the organization of actin filament arrays within muscle cells. This chain is PDZ and LIM domain protein 3 (Pdlim3), found in Rattus norvegicus (Rat).